A 183-amino-acid chain; its full sequence is Adenine phosphoribosyltransferase (183 aa).

The protein belongs to the purine/pyrimidine phosphoribosyltransferase family. Homodimer.

It is found in the cytoplasm. It carries out the reaction AMP + diphosphate = 5-phospho-alpha-D-ribose 1-diphosphate + adenine. Its pathway is purine metabolism; AMP biosynthesis via salvage pathway; AMP from adenine: step 1/1. Its function is as follows. Catalyzes a salvage reaction resulting in the formation of AMP, that is energically less costly than de novo synthesis. The polypeptide is Adenine phosphoribosyltransferase (Klebsiella pneumoniae subsp. pneumoniae (strain ATCC 700721 / MGH 78578)).